The primary structure comprises 146 residues: Basic phospholipase A2 (146 aa).

The N-terminal stretch at 1-21 (MNPAHLLVLAAVCVSLLGASS) is a signal peptide. A propeptide spanning residues 22–27 (VPPRPL) is cleaved from the precursor. Intrachain disulfides connect C38-C97, C52-C145, C54-C70, C69-C127, C76-C120, C86-C113, and C106-C118. Residues Y53, G55, and G57 each coordinate Ca(2+). H73 is an active-site residue. Residue D74 coordinates Ca(2+). N109 carries N-linked (GlcNAc...) asparagine glycosylation. D121 is a catalytic residue.

It belongs to the phospholipase A2 family. Group I subfamily. D49 sub-subfamily. Requires Ca(2+) as cofactor. Expressed by the venom gland.

It is found in the secreted. The enzyme catalyses a 1,2-diacyl-sn-glycero-3-phosphocholine + H2O = a 1-acyl-sn-glycero-3-phosphocholine + a fatty acid + H(+). PLA2 catalyzes the calcium-dependent hydrolysis of the 2-acyl groups in 3-sn-phosphoglycerides. This Micrurus corallinus (Brazilian coral snake) protein is Basic phospholipase A2.